The sequence spans 144 residues: Deoxyuridine 5'-triphosphate nucleotidohydrolase (144 aa).

4 residues coordinate dUMP: Ser66, Arg133, Phe138, and Gly139.

This sequence belongs to the dUTPase family. Homotrimer. Requires Mg(2+) as cofactor.

The catalysed reaction is dUTP + H2O = dUMP + diphosphate + H(+). It participates in pyrimidine metabolism; dUMP biosynthesis; dUMP from dCTP (dUTP route): step 2/2. In terms of biological role, involved in nucleotide metabolism via production of dUMP, the immediate precursor of thymidine nucleotides, and decreases the intracellular concentration of dUTP so that uracil cannot be incorporated into DNA. The protein is Deoxyuridine 5'-triphosphate nucleotidohydrolase (DUT1) of Encephalitozoon cuniculi (strain GB-M1) (Microsporidian parasite).